Reading from the N-terminus, the 109-residue chain is Class I hydrophobin 2 (109 aa).

The N-terminal stretch at 1–18 is a signal peptide; the sequence is MQFKLAFVSIALATLAVA. 4 disulfides stabilise this stretch: C30-C90, C37-C84, C38-C71, and C91-C104.

It belongs to the fungal hydrophobin family. Self-assembles to form functional amyloid fibrils called rodlets. Self-assembly into fibrillar rodlets occurs spontaneously at hydrophobic:hydrophilic interfaces and the rodlets further associate laterally to form amphipathic monolayers.

The protein resides in the secreted. It localises to the cell wall. Its function is as follows. Aerial growth, conidiation, and dispersal of filamentous fungi in the environment rely upon a capability of their secreting small amphipathic proteins called hydrophobins (HPBs) with low sequence identity. Class I can self-assemble into an outermost layer of rodlet bundles on aerial cell surfaces, conferring cellular hydrophobicity that supports fungal growth, development and dispersal; whereas Class II form highly ordered films at water-air interfaces through intermolecular interactions but contribute nothing to the rodlet structure. Hyd2 is a class I hydrophobin that may allow the dikaryotic mycelia to attach to the hydrophobic surface of the substrate. Higher expression in dikaryotic mycelia than in monokaryotic mycelia indicates that dikaryons require more hyd2 hydrophobin than the monokaryons, presumably for a higher rate of hyphal growth. This chain is Class I hydrophobin 2, found in Lentinula edodes (Shiitake mushroom).